Here is a 772-residue protein sequence, read N- to C-terminus: Phenylalanine--tRNA ligase beta subunit (772 aa).

The region spanning 40-158 (IKPSTNLVFA…DHYKTPNQIF (119 aa)) is the tRNA-binding domain. Residues 397-468 (SVHNVIKNKI…KKISIQEIKP (72 aa)) enclose the B5 domain. Mg(2+) is bound by residues Asp446, Asp452, Glu455, and Asp456. Residues 691–772 (SMYHDVIRDI…QEVNNYLKQF (82 aa)) form the FDX-ACB domain.

It belongs to the phenylalanyl-tRNA synthetase beta subunit family. Type 1 subfamily. Tetramer of two alpha and two beta subunits. Requires Mg(2+) as cofactor.

The protein localises to the cytoplasm. The enzyme catalyses tRNA(Phe) + L-phenylalanine + ATP = L-phenylalanyl-tRNA(Phe) + AMP + diphosphate + H(+). The protein is Phenylalanine--tRNA ligase beta subunit (pheT) of Ureaplasma parvum serovar 3 (strain ATCC 700970).